The chain runs to 457 residues: Putative F-box protein At3g58860 (457 aa).

The F-box domain occupies 6–54 (MDLFSKLPDEVISHILSSLPTKEAASTSVLAKKWRYLFAFVPSLDFNDS).

This Arabidopsis thaliana (Mouse-ear cress) protein is Putative F-box protein At3g58860.